A 279-amino-acid chain; its full sequence is Ribosomal RNA small subunit methyltransferase A (279 aa).

6 residues coordinate S-adenosyl-L-methionine: Asn27, Leu29, Gly54, Glu76, Asp102, and Asn127.

This sequence belongs to the class I-like SAM-binding methyltransferase superfamily. rRNA adenine N(6)-methyltransferase family. RsmA subfamily.

The protein localises to the cytoplasm. It carries out the reaction adenosine(1518)/adenosine(1519) in 16S rRNA + 4 S-adenosyl-L-methionine = N(6)-dimethyladenosine(1518)/N(6)-dimethyladenosine(1519) in 16S rRNA + 4 S-adenosyl-L-homocysteine + 4 H(+). In terms of biological role, specifically dimethylates two adjacent adenosines (A1518 and A1519) in the loop of a conserved hairpin near the 3'-end of 16S rRNA in the 30S particle. May play a critical role in biogenesis of 30S subunits. The chain is Ribosomal RNA small subunit methyltransferase A from Mesorhizobium japonicum (strain LMG 29417 / CECT 9101 / MAFF 303099) (Mesorhizobium loti (strain MAFF 303099)).